Reading from the N-terminus, the 344-residue chain is Heat-inducible transcription repressor HrcA (344 aa).

It belongs to the HrcA family.

Its function is as follows. Negative regulator of class I heat shock genes (grpE-dnaK-dnaJ and groELS operons). Prevents heat-shock induction of these operons. The chain is Heat-inducible transcription repressor HrcA from Corynebacterium aurimucosum (strain ATCC 700975 / DSM 44827 / CIP 107346 / CN-1) (Corynebacterium nigricans).